Here is a 627-residue protein sequence, read N- to C-terminus: Neuronal acetylcholine receptor subunit alpha-4 (627 aa).

Residues 1–31 (MELGGPGAPPPPLLPPLLLLLGAGFLPASSP) form the signal peptide. The Extracellular portion of the chain corresponds to 32–244 (VETRAHAEER…ITYAFVIRRL (213 aa)). N-linked (GlcNAc...) asparagine glycosylation occurs at N59. 2 residues coordinate Ca(2+): V78 and E80. N-linked (GlcNAc...) asparagine glycosylation is found at N109 and N176. 2 disulfides stabilise this stretch: C163–C177 and C227–C228. The chain crosses the membrane as a helical span at residues 245–269 (PLFYTINLIVPCLLISCLTVLVFYL). Residue C273 is the site of S-palmitoyl cysteine attachment. 2 helical membrane passes run 277–295 (VTLC…LLIT) and 311–332 (YLLF…VLNV). The Cytoplasmic portion of the chain corresponds to 333 to 600 (HHRSPRTHTM…WKYVAMVIDR (268 aa)). Residues 384–399 (PGFWPEPEGEPGVVSG) show a composition bias toward low complexity. Residues 384 to 463 (PGFWPEPEGE…PPPSTRAPGL (80 aa)) form a disordered region. S427 carries the phosphoserine modification. Over residues 444-458 (SPCPLPDSCRPPPST) the composition is skewed to pro residues. S541 carries the post-translational modification Phosphoserine. Residues 601–619 (IFLWVFVIVCLLGTAGLFL) form a helical membrane-spanning segment.

This sequence belongs to the ligand-gated ion channel (TC 1.A.9) family. Acetylcholine receptor (TC 1.A.9.1) subfamily. Alpha-4/CHRNA4 sub-subfamily. As to quaternary structure, neuronal AChR is composed of two different types of subunits: alpha and beta. CHRNA4 forms heteropentameric neuronal acetylcholine receptors with CHRNB2 and CHRNB4, as well as CHRNA5 and CHRNB3 as accesory subunits. Found in two major stoichiometric forms, LS (low agonist sensitivity): (CHRNA4)3:(CHRNB2)2 and HS (high agonist sensitivity): (CHRNA4)2:(CHRNB2)3, the two stoichiometric forms differ in their unitary conductance, calcium permeability, ACh sensitivity and potentiation by divalent cation. Cells produce predominantly an (CHRNA4)3:(CHRNB2)2 nAChR. The (CHRNA4)2:(CHRNB2)3 expression is selectively up-regulated by nicotine and has lower single channel conductance and calcium permeability. In the striatum, also forms CHRNA4:CHRNA6:CHRNB2 complexes. Also found in the stoichiometric form: (CHRNA4:CHRNB2)2:CHRNB3. Interacts with RIC3; which is required for proper folding and assembly. Interacts with LYPD6.

It is found in the synaptic cell membrane. The protein resides in the cell membrane. It carries out the reaction Ca(2+)(in) = Ca(2+)(out). It catalyses the reaction K(+)(in) = K(+)(out). The enzyme catalyses Na(+)(in) = Na(+)(out). Its activity is regulated as follows. Activated by a myriad of ligands such as acetylcholine, cytisine, nicotine, choline and epibatidine. Channel potentiation by calcium is stoichiometry-selective, CHRNA4:CHRNB2 nACh receptor is achieved by calcium association with topographically distinct sites framed by anionic residues within the CHRNA4 subunit and between the CHRNA4 and CHRNB2 subunits. nAChR activity is inhibited by the antagonist alpha-conotoxins BuIA, PnIA, GID and MII, small disulfide-constrained peptides from cone snails. In terms of biological role, component of neuronal acetylcholine receptors (nAChRs) that function as pentameric, ligand-gated cation channels with high calcium permeability among other activities. nAChRs are excitatory neurotrasnmitter receptors formed by a collection of nAChR subunits known to mediate synaptic transmission in the nervous system and the neuromuscular junction. Each nAchR subunit confers differential attributes to channel properties, including activation, deactivation and desensitization kinetics, pH sensitivity, cation permeability, and binding to allosteric modulators. CHRNA4 forms heteropentameric neuronal acetylcholine receptors with CHRNB2 and CHRNB4, as well as CHRNA5 and CHRNB3 as accesory subunits. Is the most abundant nAChR subtype expressed in the central nervous system. Found in two major stoichiometric forms,(CHRNA4)3:(CHRNB2)2 and (CHRNA4)2:(CHRNB2)3, the two stoichiometric forms differ in their unitary conductance, calcium permeability, ACh sensitivity and potentiation by divalent cation. Involved in the modulation of calcium-dependent signaling pathways, influences the release of neurotransmitters, including dopamine, glutamate and GABA. The protein is Neuronal acetylcholine receptor subunit alpha-4 (CHRNA4) of Mustela putorius furo (European domestic ferret).